Here is a 173-residue protein sequence, read N- to C-terminus: Alpha-crystallin A chain (173 aa).

An N-acetylmethionine modification is found at Met1. The tract at residues 1–63 (MDIAIQHPWF…RTVLDSGISE (63 aa)) is required for complex formation with BFSP1 and BFSP2. Position 6 is a deamidated glutamine; partial (Gln6). Residue Ser45 is modified to Phosphoserine. Gln50 carries the post-translational modification Deamidated glutamine; partial. The region spanning 52–162 (LFRTVLDSGI…GHSERAIPVS (111 aa)) is the sHSP domain. Residue Lys70 is modified to N6-acetyllysine. Gln90 bears the Deamidated glutamine; partial mark. Residue Lys99 is modified to N6-acetyllysine. His100 is a binding site for Zn(2+). Asn101 is modified (deamidated asparagine; partial). Residues Glu102 and His107 each contribute to the Zn(2+) site. Phosphoserine is present on Ser122. Deamidated asparagine; partial is present on Asn123. Positions 144 to 173 (PKVPSGVDAGHSERAIPVSREEKPSSAPSS) are disordered. Positions 153–167 (GHSERAIPVSREEKP) are enriched in basic and acidic residues. A Zn(2+)-binding site is contributed by His154. Ser162 is a glycosylation site (O-linked (GlcNAc) serine).

Belongs to the small heat shock protein (HSP20) family. As to quaternary structure, heteromer composed of three CRYAA and one CRYAB subunits. Inter-subunit bridging via zinc ions enhances stability, which is crucial as there is no protein turn over in the lens. Can also form homodimers and homotetramers (dimers of dimers) which serve as the building blocks of homooligomers. Within homooligomers, the zinc-binding motif is created from residues of 3 different molecules. His-100 and Glu-102 from one molecule are ligands of the zinc ion, and His-107 and His-154 residues from additional molecules complete the site with tetrahedral coordination geometry. Part of a complex required for lens intermediate filament formation composed of BFSP1, BFSP2 and CRYAA. In terms of processing, acetylation at Lys-70 may increase chaperone activity. Post-translationally, undergoes age-dependent proteolytical cleavage at the C-terminus.

It is found in the cytoplasm. The protein resides in the nucleus. Its function is as follows. Contributes to the transparency and refractive index of the lens. Acts as a chaperone, preventing aggregation of various proteins under a wide range of stress conditions. Required for the correct formation of lens intermediate filaments as part of a complex composed of BFSP1, BFSP2 and CRYAA. This is Alpha-crystallin A chain (CRYAA) from Pteropus poliocephalus (Grey-headed flying fox).